The following is a 405-amino-acid chain: Multifunctional CCA protein (405 aa).

The ATP site is built by Gly8 and Arg11. 2 residues coordinate CTP: Gly8 and Arg11. Residues Asp21 and Asp23 each contribute to the Mg(2+) site. Residues Arg91, Arg137, and Arg140 each contribute to the ATP site. CTP is bound by residues Arg91, Arg137, and Arg140. The HD domain occupies 228-329 (TGIHSMMVLE…NDFLDKCDVW (102 aa)).

This sequence belongs to the tRNA nucleotidyltransferase/poly(A) polymerase family. Bacterial CCA-adding enzyme type 1 subfamily. Monomer. Can also form homodimers and oligomers. It depends on Mg(2+) as a cofactor. Requires Ni(2+) as cofactor.

It carries out the reaction a tRNA precursor + 2 CTP + ATP = a tRNA with a 3' CCA end + 3 diphosphate. It catalyses the reaction a tRNA with a 3' CCA end + 2 CTP + ATP = a tRNA with a 3' CCACCA end + 3 diphosphate. Functionally, catalyzes the addition and repair of the essential 3'-terminal CCA sequence in tRNAs without using a nucleic acid template. Adds these three nucleotides in the order of C, C, and A to the tRNA nucleotide-73, using CTP and ATP as substrates and producing inorganic pyrophosphate. tRNA 3'-terminal CCA addition is required both for tRNA processing and repair. Also involved in tRNA surveillance by mediating tandem CCA addition to generate a CCACCA at the 3' terminus of unstable tRNAs. While stable tRNAs receive only 3'-terminal CCA, unstable tRNAs are marked with CCACCA and rapidly degraded. The polypeptide is Multifunctional CCA protein (Pseudoalteromonas atlantica (strain T6c / ATCC BAA-1087)).